The sequence spans 100 residues: NADH-quinone oxidoreductase subunit K (100 aa).

3 helical membrane passes run 4–24, 29–49, and 60–80; these read LSHA…AIIV, LFIL…FVIV, and IMYI…LALL.

This sequence belongs to the complex I subunit 4L family. In terms of assembly, NDH-1 is composed of 13 different subunits. Subunits NuoA, H, J, K, L, M, N constitute the membrane sector of the complex.

The protein localises to the cell inner membrane. It catalyses the reaction a quinone + NADH + 5 H(+)(in) = a quinol + NAD(+) + 4 H(+)(out). Functionally, NDH-1 shuttles electrons from NADH, via FMN and iron-sulfur (Fe-S) centers, to quinones in the respiratory chain. The immediate electron acceptor for the enzyme in this species is believed to be ubiquinone. Couples the redox reaction to proton translocation (for every two electrons transferred, four hydrogen ions are translocated across the cytoplasmic membrane), and thus conserves the redox energy in a proton gradient. The protein is NADH-quinone oxidoreductase subunit K of Blochmanniella pennsylvanica (strain BPEN).